The following is a 392-amino-acid chain: MELGVSSQLWLWLLLLLLPPVPGREKESGSKWKVFIDQINRALENYEPCSSPNCSCYHGVIEEDLTPFRGGISRKMMAEVVRRKLGTHYQIIKNRLYRESDCMFPSRCSGVEHFILEVIGRLPDMEMVINVRDYPQVPKWMEPAIPIFSFSKTLEYHDIMYPAWTFWEGGPAVWPIYPMGLGRWDLFREDLVRSAAQWPWKKKNSTAYFRGSRTSPERDPLILLSRKNPKLVDAEYTKNQAWKSMKDTLGKPAAKDVHLVDHCKYKYLFNFRGVAASFRFKHLFLCGSLVFHVGDEWLEFFYPQLKPWVHYIPVKTDLSNVQELLQFVKANDDVAQEIAERGSQFILNHLKMDDITCYWENLLTEYSKFLSYNVTRRKGYDQIVPKILKIEL.

The first 23 residues, 1–23, serve as a signal peptide directing secretion; sequence MELGVSSQLWLWLLLLLLPPVPG. Intrachain disulfides connect Cys-49-Cys-56, Cys-54-Cys-357, Cys-102-Cys-108, and Cys-263-Cys-286. Asn-53 carries an N-linked (GlcNAc...) asparagine glycan. Residues 103-107 are interaction with the consensus sequence C-X-S-X-[PA]-C in peptide substrates; the sequence is MFPSR. Catalysis depends on Asp-133, which acts as the Proton donor/acceptor. The tract at residues 172 to 178 is interaction with the consensus sequence C-X-S-X-[PA]-C in peptide substrates; the sequence is AVWPIYP. Residue Tyr-177 participates in UDP-alpha-D-glucose binding. N-linked (GlcNAc...) asparagine glycosylation is present at Asn-204. UDP-alpha-D-glucose-binding positions include Ser-212, Arg-218, and 274-279; that span reads VAASFR. N-linked (GlcNAc...) asparagine glycosylation is present at Asn-373. The Prevents secretion from ER motif lies at 389–392; the sequence is KIEL.

Belongs to the glycosyltransferase 90 family.

The protein localises to the endoplasmic reticulum lumen. It catalyses the reaction L-seryl-[EGF-like domain protein] + UDP-alpha-D-xylose = 3-O-(beta-D-xylosyl)-L-seryl-[EGF-like domain protein] + UDP + H(+). It carries out the reaction L-seryl-[EGF-like domain protein] + UDP-alpha-D-glucose = 3-O-(beta-D-glucosyl)-L-seryl-[EGF-like domain protein] + UDP + H(+). Its pathway is protein modification; protein glycosylation. In terms of biological role, dual specificity glycosyltransferase that catalyzes the transfer of glucose and xylose from UDP-glucose and UDP-xylose, respectively, to a serine residue found in the consensus sequence of C-X-S-X-P-C. Specifically targets extracellular EGF repeats of protein such as CRB2, F7, F9 and NOTCH2. Acts as a positive regulator of Notch signaling by mediating O-glucosylation of Notch, leading to regulate muscle development. Notch glucosylation does not affect Notch ligand binding. Required during early development to promote gastrulation: acts by mediating O-glucosylation of CRB2, which is required for CRB2 localization to the cell membrane. The protein is Protein O-glucosyltransferase 1 (POGLUT1) of Bos taurus (Bovine).